The chain runs to 154 residues: Large ribosomal subunit protein bL17 (154 aa).

Residues threonine 127 to glutamate 154 are disordered. Basic and acidic residues predominate over residues lysine 141–glutamate 154.

Belongs to the bacterial ribosomal protein bL17 family. In terms of assembly, part of the 50S ribosomal subunit. Contacts protein L32.

The chain is Large ribosomal subunit protein bL17 from Chlorobaculum parvum (strain DSM 263 / NCIMB 8327) (Chlorobium vibrioforme subsp. thiosulfatophilum).